The following is a 244-amino-acid chain: tRNA (guanine-N(7)-)-methyltransferase (244 aa).

Residues 1–24 form a disordered region; the sequence is MTDSHVPHPESPAVEEGEERPHRR. Positions 74, 99, 126, and 149 each coordinate S-adenosyl-L-methionine. D149 is a catalytic residue. Substrate is bound by residues K153, D185, and 222 to 225; that span reads TKFE.

Belongs to the class I-like SAM-binding methyltransferase superfamily. TrmB family.

The catalysed reaction is guanosine(46) in tRNA + S-adenosyl-L-methionine = N(7)-methylguanosine(46) in tRNA + S-adenosyl-L-homocysteine. Its pathway is tRNA modification; N(7)-methylguanine-tRNA biosynthesis. Functionally, catalyzes the formation of N(7)-methylguanine at position 46 (m7G46) in tRNA. This Pseudomonas savastanoi pv. phaseolicola (strain 1448A / Race 6) (Pseudomonas syringae pv. phaseolicola (strain 1448A / Race 6)) protein is tRNA (guanine-N(7)-)-methyltransferase.